A 352-amino-acid polypeptide reads, in one-letter code: Mitochondrial ubiquitin ligase activator of NFKB 1 (352 aa).

Residues 1-8 (MESGSRPS) are Cytoplasmic-facing. Residues 9-29 (LGQVILLGTSSMVTAVLYSIY) form a helical membrane-spanning segment. At 30–238 (RQKAQVAQEL…LLHRQESSVR (209 aa)) the chain is on the mitochondrial intermembrane side. A Glycyl lysine isopeptide (Lys-Gly) (interchain with G-Cter in ubiquitin) cross-link involves residue lysine 52. The chain crosses the membrane as a helical span at residues 239–259 (LWKILVLVFGFATCATLFFIL). Over 260–352 (RKQYLHRQER…ITRVIPLYNS (93 aa)) the chain is Cytoplasmic. Lysine 299 is covalently cross-linked (Glycyl lysine isopeptide (Lys-Gly) (interchain with G-Cter in ubiquitin)). The RING-type zinc finger occupies 302-340 (CVVCLSNFKSCVFLECGHVCSCRQCYLALPEPKRCPICR).

As to quaternary structure, homooligomer. Interacts with MAP3K7/TAK1. Interacts with UBC9. Interacts with and sumoylates DNM1L. Interacts with MAVS. Interacts with TP53 (via N-terminus); the interaction leads to ubiquitination and proteasomal degradation of TP53. Post-translationally, ubiquitinated by PRKN during mitophagy, leading to its degradation and enhancement of mitophagy. Deubiquitinated by USP30. As to expression, expressed in cortical neurons (at protein level).

The protein resides in the mitochondrion outer membrane. Its subcellular location is the peroxisome. It carries out the reaction S-ubiquitinyl-[E2 ubiquitin-conjugating enzyme]-L-cysteine + [acceptor protein]-L-lysine = [E2 ubiquitin-conjugating enzyme]-L-cysteine + N(6)-ubiquitinyl-[acceptor protein]-L-lysine.. It functions in the pathway protein modification; protein ubiquitination. The protein operates within protein modification; protein sumoylation. In terms of biological role, exhibits weak E3 ubiquitin-protein ligase activity. E3 ubiquitin ligases accept ubiquitin from an E2 ubiquitin-conjugating enzyme in the form of a thioester and then directly transfer the ubiquitin to targeted substrates. Can ubiquitinate AKT1 preferentially at 'Lys-284' involving 'Lys-48'-linked polyubiquitination and seems to be involved in regulation of Akt signaling by targeting phosphorylated Akt to proteasomal degradation. Mediates polyubiquitination of cytoplasmic TP53 at 'Lys-27' which targets TP53 for proteasomal degradation, thus reducing TP53 levels in the cytoplasm and mitochondrion. Proposed to preferentially act as a SUMO E3 ligase at physiological concentrations. Plays a role in the control of mitochondrial morphology by promoting mitochondrial fragmentation, and influences mitochondrial localization. Likely to promote mitochondrial fission through negatively regulating the mitochondrial fusion proteins MFN1 and MFN2, acting in a pathway that is parallel to the PRKN/PINK1 regulatory pathway. May also be involved in the sumoylation of the membrane fission protein DNM1L. Inhibits cell growth. When overexpressed, activates JNK through MAP3K7/TAK1 and induces caspase-dependent apoptosis. Involved in the modulation of innate immune defense against viruses by inhibiting RIGI-dependent antiviral response. Can mediate RIGI sumoylation and disrupt its polyubiquitination. This is Mitochondrial ubiquitin ligase activator of NFKB 1 (Mul1) from Mus musculus (Mouse).